The chain runs to 217 residues: Peptide methionine sulfoxide reductase MsrA 1 (217 aa).

Residue Cys-54 is part of the active site.

This sequence belongs to the MsrA Met sulfoxide reductase family.

The catalysed reaction is L-methionyl-[protein] + [thioredoxin]-disulfide + H2O = L-methionyl-(S)-S-oxide-[protein] + [thioredoxin]-dithiol. It catalyses the reaction [thioredoxin]-disulfide + L-methionine + H2O = L-methionine (S)-S-oxide + [thioredoxin]-dithiol. In terms of biological role, has an important function as a repair enzyme for proteins that have been inactivated by oxidation. Catalyzes the reversible oxidation-reduction of methionine sulfoxide in proteins to methionine. This chain is Peptide methionine sulfoxide reductase MsrA 1 (msrA1), found in Caulobacter vibrioides (strain ATCC 19089 / CIP 103742 / CB 15) (Caulobacter crescentus).